The sequence spans 566 residues: CTP synthase (566 aa).

An amidoligase domain region spans residues 1-282; it reads MSIKRAQLGG…DAYIIDQLGL (282 aa). Residue serine 23 participates in CTP binding. Serine 23 is a binding site for UTP. Residues 24–29 and aspartate 81 each bind ATP; that span reads SLGKGL. 2 residues coordinate Mg(2+): aspartate 81 and glutamate 156. Residues 163 to 165, 203 to 208, and lysine 239 contribute to the CTP site; these read DIE and KTKPTQ. Residues 203–208 and lysine 239 contribute to the UTP site; that span reads KTKPTQ. The Glutamine amidotransferase type-1 domain occupies 308–556; it reads TIGLVGKYID…IGAALDRQKA (249 aa). Glycine 371 contributes to the L-glutamine binding site. The active-site Nucleophile; for glutamine hydrolysis is the cysteine 398. L-glutamine-binding positions include 399–402, glutamate 422, and arginine 482; that span reads LGLQ. Active-site residues include histidine 529 and glutamate 531.

Belongs to the CTP synthase family. Homotetramer.

The catalysed reaction is UTP + L-glutamine + ATP + H2O = CTP + L-glutamate + ADP + phosphate + 2 H(+). It carries out the reaction L-glutamine + H2O = L-glutamate + NH4(+). It catalyses the reaction UTP + NH4(+) + ATP = CTP + ADP + phosphate + 2 H(+). It functions in the pathway pyrimidine metabolism; CTP biosynthesis via de novo pathway; CTP from UDP: step 2/2. Its activity is regulated as follows. Allosterically activated by GTP, when glutamine is the substrate; GTP has no effect on the reaction when ammonia is the substrate. The allosteric effector GTP functions by stabilizing the protein conformation that binds the tetrahedral intermediate(s) formed during glutamine hydrolysis. Inhibited by the product CTP, via allosteric rather than competitive inhibition. Catalyzes the ATP-dependent amination of UTP to CTP with either L-glutamine or ammonia as the source of nitrogen. Regulates intracellular CTP levels through interactions with the four ribonucleotide triphosphates. The protein is CTP synthase of Leifsonia xyli subsp. xyli (strain CTCB07).